The following is a 135-amino-acid chain: Agouti-signaling protein (135 aa).

The N-terminal stretch at 1 to 22 (MNILRLLLATLLVCLCLLTAYS) is a signal peptide. Asn-39 carries N-linked (GlcNAc...) asparagine glycosylation. The interval 56-101 (NKKSKKISRKEAEKKRSSKKKASMKNVAQPRRPRPPPPAPCVATRD) is disordered. Intrachain disulfides connect Cys-96/Cys-111, Cys-103/Cys-117, Cys-110/Cys-128, Cys-114/Cys-135, and Cys-119/Cys-126. Residues 96 to 135 (CVATRDSCKPPAPACCDPCASCQCRFFRSSCSCRVLNPTC) form the Agouti domain.

Its subcellular location is the secreted. Its function is as follows. Involved in the regulation of melanogenesis. The binding of ASP to MC1R precludes alpha-MSH initiated signaling and thus blocks production of cAMP, leading to a down-regulation of eumelanogenesis (brown/black pigment) and thus increasing synthesis of pheomelanin (yellow/red pigment). The chain is Agouti-signaling protein (ASIP) from Felis catus (Cat).